Here is a 155-residue protein sequence, read N- to C-terminus: Large ribosomal subunit protein bL9c (155 aa).

The protein belongs to the bacterial ribosomal protein bL9 family.

It is found in the plastid. It localises to the chloroplast. Binds to the 23S rRNA. The polypeptide is Large ribosomal subunit protein bL9c (Pyropia yezoensis (Susabi-nori)).